A 249-amino-acid polypeptide reads, in one-letter code: Coproheme decarboxylase (249 aa).

Residues Arg-131, 145–149 (YPMDK), His-172, and Gln-185 contribute to the Fe-coproporphyrin III site. Residue Tyr-145 is part of the active site.

Belongs to the ChdC family. Type 1 subfamily. The cofactor is Fe-coproporphyrin III.

It catalyses the reaction Fe-coproporphyrin III + 2 H2O2 + 2 H(+) = heme b + 2 CO2 + 4 H2O. The enzyme catalyses Fe-coproporphyrin III + H2O2 + H(+) = harderoheme III + CO2 + 2 H2O. The catalysed reaction is harderoheme III + H2O2 + H(+) = heme b + CO2 + 2 H2O. It functions in the pathway porphyrin-containing compound metabolism; protoheme biosynthesis. Its function is as follows. Involved in coproporphyrin-dependent heme b biosynthesis. Catalyzes the decarboxylation of Fe-coproporphyrin III (coproheme) to heme b (protoheme IX), the last step of the pathway. The reaction occurs in a stepwise manner with a three-propionate intermediate. This Staphylococcus haemolyticus (strain JCSC1435) protein is Coproheme decarboxylase.